Reading from the N-terminus, the 267-residue chain is tRNA pseudouridine synthase A (267 aa).

Catalysis depends on D54, which acts as the Nucleophile. Y114 lines the substrate pocket.

The protein belongs to the tRNA pseudouridine synthase TruA family. In terms of assembly, homodimer.

The enzyme catalyses uridine(38/39/40) in tRNA = pseudouridine(38/39/40) in tRNA. Functionally, formation of pseudouridine at positions 38, 39 and 40 in the anticodon stem and loop of transfer RNAs. The sequence is that of tRNA pseudouridine synthase A from Tropheryma whipplei (strain TW08/27) (Whipple's bacillus).